We begin with the raw amino-acid sequence, 515 residues long: MVVAYKHEPFTDFSVEANKLAFEEGLKKVESYLGQDYPLIIGGEKITTEDKIVSVNPANKEELVGRVSKASRELAEKAMQVADATFQTWRKSKPEMRADILFRAAAIVRRRKHEFSAILVKEAGKPWNEADADTAEAIDFMEYYARQMLKLKDGMPVESRPIEYNRFSYIPLGVGVIISPWNFPFAIMAGMTTAAVVSGNTVLLKPASTTPVVAAKFMEVLEEAGLPAGVVNFVPGNGSEVGDYLVDHPRTRFVSFTGSRDVGIRIYERAAKVNPGQIWLKRVIAEMGGKDTIVVDKEADLELAAKSIVASAFGFSGQKCSACSRAVIHEDVYDHVLNRAVELTKELTVGNPDAKDINMGPVNDQAAFDKVMSYVAIGKEEGKIVSGGEGDDSKGWFIQPTIVADVAEDARLMKEEIFGPVVAFCKAKDFDHALAIANNTEYGLTGAVLSNNRDHIEKAREDFHVGNLYFNRGCTGAIVGYQPFGGFNMSGTDSKAGGPDYLALHMQAKTTSETL.

Residues glutamate 286 and cysteine 320 contribute to the active site.

Belongs to the aldehyde dehydrogenase family. RocA subfamily.

It carries out the reaction L-glutamate 5-semialdehyde + NAD(+) + H2O = L-glutamate + NADH + 2 H(+). The protein operates within amino-acid degradation; L-proline degradation into L-glutamate; L-glutamate from L-proline: step 2/2. This Bacillus mycoides (strain KBAB4) (Bacillus weihenstephanensis) protein is 1-pyrroline-5-carboxylate dehydrogenase.